The chain runs to 293 residues: uncharacterized protein (293 aa).

Active-site charge relay system residues include Thr43 and Tyr105. The active-site Proton donor is Tyr131. The active-site Schiff-base intermediate with substrate is Lys159.

Belongs to the DapA family. Homotetramer.

The protein resides in the cytoplasm. This is an uncharacterized protein from Thermococcus onnurineus (strain NA1).